The sequence spans 485 residues: UDP-glycosyltransferase 71B2 (485 aa).

UDP-alpha-D-glucose-binding positions include S287, 354-356, 371-379, and 393-396; these read APQ, HCGWNSTLE, and YAEQ.

This sequence belongs to the UDP-glycosyltransferase family.

Its function is as follows. Glucosyltransferase that glucosylates the cell wall inhibitor hypostatin in vivo to form a bioactive glucoside. This Arabidopsis thaliana (Mouse-ear cress) protein is UDP-glycosyltransferase 71B2 (UGT71B2).